We begin with the raw amino-acid sequence, 171 residues long: CDP-archaeol synthase (171 aa).

5 consecutive transmembrane segments (helical) span residues 7–27 (MFWA…PVLL), 55–75 (FLGG…LTPA), 84–104 (VLLA…GSFI), 115–135 (PAVG…AYPV), and 141–161 (GQML…NYFA).

It belongs to the CDP-archaeol synthase family. Mg(2+) serves as cofactor.

The protein localises to the cell membrane. The enzyme catalyses 2,3-bis-O-(geranylgeranyl)-sn-glycerol 1-phosphate + CTP + H(+) = CDP-2,3-bis-O-(geranylgeranyl)-sn-glycerol + diphosphate. Its pathway is membrane lipid metabolism; glycerophospholipid metabolism. Catalyzes the formation of CDP-2,3-bis-(O-geranylgeranyl)-sn-glycerol (CDP-archaeol) from 2,3-bis-(O-geranylgeranyl)-sn-glycerol 1-phosphate (DGGGP) and CTP. This reaction is the third ether-bond-formation step in the biosynthesis of archaeal membrane lipids. The protein is CDP-archaeol synthase of Thermococcus gammatolerans (strain DSM 15229 / JCM 11827 / EJ3).